Here is a 349-residue protein sequence, read N- to C-terminus: MIEYPHIPVMLEESIQGLGVIPGGRYVDCTLGAGGHSEAILEHSYPGGQLLSIDADPSAITLAAERLKSFGSSVLLVNDNFANLKDICQRYEYMPVHGILFDLGLSSMQLDRQESGFSFQTEAPLDMRFSPEQELTAADIINGYDVTELSDLIWKYGEEPFSRRIARAIAEKRPFKTTTELAAAIERAVGGRHGRIHPATRTFQALRIAVNEELSHLESALSQAHSLLGHGGRLVVISYHSLEDRIVKQYFQKEAKGCICPDDIPQCVCDHQPSLRIINRRVITPSDEEISRNPRSRSAKMRVAERIIEPGEGRFFSSREDELVNHVSRTGSVQHGQAKHKGVVQRGGS.

S-adenosyl-L-methionine is bound by residues 34-36, Asp-54, Phe-81, Asp-102, and Gln-109; that span reads GGH. The interval 328–349 is disordered; that stretch reads SRTGSVQHGQAKHKGVVQRGGS.

The protein belongs to the methyltransferase superfamily. RsmH family.

The protein localises to the cytoplasm. The catalysed reaction is cytidine(1402) in 16S rRNA + S-adenosyl-L-methionine = N(4)-methylcytidine(1402) in 16S rRNA + S-adenosyl-L-homocysteine + H(+). Its function is as follows. Specifically methylates the N4 position of cytidine in position 1402 (C1402) of 16S rRNA. This chain is Ribosomal RNA small subunit methyltransferase H, found in Dehalococcoides mccartyi (strain ATCC BAA-2100 / JCM 16839 / KCTC 5957 / BAV1).